The following is a 262-amino-acid chain: Small ribosomal subunit protein eS1 (262 aa).

It belongs to the eukaryotic ribosomal protein eS1 family. As to quaternary structure, component of the small ribosomal subunit. Mature ribosomes consist of a small (40S) and a large (60S) subunit. The 40S subunit contains about 32 different proteins and 1 molecule of RNA (18S). The 60S subunit contains about 42 different proteins and 3 molecules of RNA (28S, 5.8S and 5S).

Its subcellular location is the cytoplasm. In terms of biological role, component of the ribosome, a large ribonucleoprotein complex responsible for the synthesis of proteins in the cell. The small ribosomal subunit (SSU) binds messenger RNAs (mRNAs) and translates the encoded message by selecting cognate aminoacyl-transfer RNA (tRNA) molecules. The large subunit (LSU) contains the ribosomal catalytic site termed the peptidyl transferase center (PTC), which catalyzes the formation of peptide bonds, thereby polymerizing the amino acids delivered by tRNAs into a polypeptide chain. The nascent polypeptides leave the ribosome through a tunnel in the LSU and interact with protein factors that function in enzymatic processing, targeting, and the membrane insertion of nascent chains at the exit of the ribosomal tunnel. The polypeptide is Small ribosomal subunit protein eS1 (Plasmodium falciparum (isolate 3D7)).